Consider the following 382-residue polypeptide: Flap endonuclease 1 (382 aa).

The tract at residues 1–104 is N-domain; the sequence is MGIKGLSQVI…GELEKRTERR (104 aa). Residue D34 participates in Mg(2+) binding. 2 residues coordinate DNA: R47 and R70. Mg(2+) is bound by residues D86, E158, E160, D179, and D181. The interval 122–253 is I-domain; that stretch reads EAEKFERRLV…KKAVELIKQH (132 aa). E158 is a binding site for DNA. 2 residues coordinate DNA: G231 and D233. D233 provides a ligand contact to Mg(2+). The interaction with PCNA stretch occupies residues 336-344; sequence TQGRIDSFF. Positions 359 to 368 are enriched in basic and acidic residues; sequence KAQEEAEKMK. Residues 359-382 are disordered; that stretch reads KAQEEAEKMKKGGKKSGPPKKKAK. Basic residues predominate over residues 369–382; it reads KGGKKSGPPKKKAK.

It belongs to the XPG/RAD2 endonuclease family. FEN1 subfamily. Interacts with PCNA. Three molecules of crn-1 bind to one PCNA trimer with each molecule binding to one PCNA monomer. PCNA stimulates the nuclease activity without altering cleavage specificity. Mg(2+) is required as a cofactor. Phosphorylated. Phosphorylation upon DNA damage induces relocalization to the nuclear plasma.

It is found in the nucleus. Its subcellular location is the nucleolus. The protein resides in the nucleoplasm. The protein localises to the mitochondrion. In terms of biological role, structure-specific nuclease with 5'-flap endonuclease and 5'-3' exonuclease activities involved in DNA replication and repair. During DNA replication, cleaves the 5'-overhanging flap structure that is generated by displacement synthesis when DNA polymerase encounters the 5'-end of a downstream Okazaki fragment. It enters the flap from the 5'-end and then tracks to cleave the flap base, leaving a nick for ligation. Also involved in the long patch base excision repair (LP-BER) pathway, by cleaving within the apurinic/apyrimidinic (AP) site-terminated flap. Acts as a genome stabilization factor that prevents flaps from equilibrating into structures that lead to duplications and deletions. Also possesses 5'-3' exonuclease activity on nicked or gapped double-stranded DNA, and exhibits RNase H activity. Also involved in replication and repair of rDNA and in repairing mitochondrial DNA. The sequence is that of Flap endonuclease 1 from Caenorhabditis briggsae.